A 245-amino-acid polypeptide reads, in one-letter code: DNA polymerase sliding clamp 2 (245 aa).

Belongs to the PCNA family. Homotrimer. The subunits circularize to form a toroid; DNA passes through its center. Replication factor C (RFC) is required to load the toroid on the DNA.

Its function is as follows. Sliding clamp subunit that acts as a moving platform for DNA processing. Responsible for tethering the catalytic subunit of DNA polymerase and other proteins to DNA during high-speed replication. The protein is DNA polymerase sliding clamp 2 of Sulfolobus acidocaldarius (strain ATCC 33909 / DSM 639 / JCM 8929 / NBRC 15157 / NCIMB 11770).